Consider the following 200-residue polypeptide: Small ribosomal subunit protein uS4 (200 aa).

The segment at 22 to 42 is disordered; the sequence is TGKELEKRPYAPGPHGPNQRK. The S4 RNA-binding domain maps to 92 to 152; the sequence is ARLDNLVYRM…EKSNNLVVVK (61 aa).

The protein belongs to the universal ribosomal protein uS4 family. Part of the 30S ribosomal subunit. Contacts protein S5. The interaction surface between S4 and S5 is involved in control of translational fidelity.

In terms of biological role, one of the primary rRNA binding proteins, it binds directly to 16S rRNA where it nucleates assembly of the body of the 30S subunit. Functionally, with S5 and S12 plays an important role in translational accuracy. The polypeptide is Small ribosomal subunit protein uS4 (Bacillus thuringiensis subsp. konkukian (strain 97-27)).